The sequence spans 507 residues: ATP synthase subunit alpha (507 aa).

170 to 177 lines the ATP pocket; it reads GDRQTGKT.

Belongs to the ATPase alpha/beta chains family. As to quaternary structure, F-type ATPases have 2 components, CF(1) - the catalytic core - and CF(0) - the membrane proton channel. CF(1) has five subunits: alpha(3), beta(3), gamma(1), delta(1), epsilon(1). CF(0) has three main subunits: a(1), b(2) and c(9-12). The alpha and beta chains form an alternating ring which encloses part of the gamma chain. CF(1) is attached to CF(0) by a central stalk formed by the gamma and epsilon chains, while a peripheral stalk is formed by the delta and b chains.

Its subcellular location is the cell inner membrane. It catalyses the reaction ATP + H2O + 4 H(+)(in) = ADP + phosphate + 5 H(+)(out). Produces ATP from ADP in the presence of a proton gradient across the membrane. The alpha chain is a regulatory subunit. The sequence is that of ATP synthase subunit alpha from Thermosipho melanesiensis (strain DSM 12029 / CIP 104789 / BI429).